Reading from the N-terminus, the 1032-residue chain is uncharacterized protein (1032 aa).

The Cytoplasmic portion of the chain corresponds to 1–17; that stretch reads MYEEIRMKFTDIFIRRP. Residues 18–36 traverse the membrane as a helical segment; it reads VLAVSISLLMIILGLQAIS. Residues 37–337 are Periplasmic-facing; the sequence is KLAVREYPKM…TIAINSSIHE (301 aa). Residues 338–357 traverse the membrane as a helical segment; the sequence is VIKTIGEATLIVLVVILMFI. The Cytoplasmic portion of the chain corresponds to 358–363; it reads GSFRAI. The chain crosses the membrane as a helical span at residues 364–383; the sequence is LIPILAIPISLIGVLMLLQS. The Periplasmic portion of the chain corresponds to 384–389; it reads FNFSIN. A helical transmembrane segment spans residues 390 to 411; sequence LMTLLALILAIGLVVDDAIVVL. Topologically, residues 412 to 438 are cytoplasmic; that stretch reads ENIDRHIKAGETPFRAAIIGTREIAVP. Residues 439-457 traverse the membrane as a helical segment; that stretch reads VISMTIALIAVYSPMALMG. Topologically, residues 458-470 are periplasmic; it reads GITGTLFKEFALT. A helical membrane pass occupies residues 471-493; the sequence is LAGAVFISGVVALTLSPMMSSKL. The Cytoplasmic portion of the chain corresponds to 494–529; it reads LKSNAKPTWMEERVEHTLGKVNRVYEYMLDLVMLNR. Residues 530–548 form a helical membrane-spanning segment; that stretch reads KSMLAFAVVIFSTLPFLFN. The Periplasmic segment spans residues 549-852; it reads SLSSELTPNE…ARQLVQEGNA (304 aa). The chain crosses the membrane as a helical span at residues 853-872; the sequence is LAVTFALAVIIIFLVLAIQF. Residues 873 to 878 are Cytoplasmic-facing; the sequence is ESIRDP. A helical transmembrane segment spans residues 879-898; that stretch reads MVIMISVPLAVSGALVSLNI. Topologically, residues 899–910 are periplasmic; it reads LSFFSIAGTTLN. The chain crosses the membrane as a helical span at residues 911–932; the sequence is IYSQVGLITLVGLITKHGILMC. Residues 933–960 lie on the Cytoplasmic side of the membrane; it reads EVAKEEQLNHGKTRIEAITHAAKVRLRP. Residues 961-979 form a helical membrane-spanning segment; sequence ILMTTAAMVAGLIPLLYAT. Topologically, residues 980–992 are periplasmic; the sequence is GAGAVSRFSIGIV. Residues 993–1015 form a helical membrane-spanning segment; the sequence is IVAGLSIGTIFTLFVLPVVYSYV. Topologically, residues 1016 to 1032 are cytoplasmic; the sequence is ATEHKPLPVFDENKTTH.

It belongs to the resistance-nodulation-cell division (RND) (TC 2.A.6) family.

It localises to the cell inner membrane. In terms of biological role, could be a drug efflux pump. This is an uncharacterized protein from Haemophilus influenzae (strain ATCC 51907 / DSM 11121 / KW20 / Rd).